Reading from the N-terminus, the 283-residue chain is Isochorismatase domain-containing protein 1 (283 aa).

This sequence belongs to the isochorismatase family.

The sequence is that of Isochorismatase domain-containing protein 1 (isoc1) from Danio rerio (Zebrafish).